A 333-amino-acid polypeptide reads, in one-letter code: Biotin synthase (333 aa).

Residues 47 to 273 (YYGNKVKLNM…MNPTKEIRIA (227 aa)) form the Radical SAM core domain. [4Fe-4S] cluster contacts are provided by Cys65, Cys69, and Cys72. [2Fe-2S] cluster contacts are provided by Cys109, Cys141, Cys201, and Arg271.

It belongs to the radical SAM superfamily. Biotin synthase family. Homodimer. The cofactor is [4Fe-4S] cluster. Requires [2Fe-2S] cluster as cofactor.

The enzyme catalyses (4R,5S)-dethiobiotin + (sulfur carrier)-SH + 2 reduced [2Fe-2S]-[ferredoxin] + 2 S-adenosyl-L-methionine = (sulfur carrier)-H + biotin + 2 5'-deoxyadenosine + 2 L-methionine + 2 oxidized [2Fe-2S]-[ferredoxin]. It functions in the pathway cofactor biosynthesis; biotin biosynthesis; biotin from 7,8-diaminononanoate: step 2/2. Catalyzes the conversion of dethiobiotin (DTB) to biotin by the insertion of a sulfur atom into dethiobiotin via a radical-based mechanism. The sequence is that of Biotin synthase from Geobacillus kaustophilus (strain HTA426).